Here is a 1024-residue protein sequence, read N- to C-terminus: Multidrug resistance protein MdtC (1024 aa).

The next 12 membrane-spanning stretches (helical) occupy residues 12–32 (VATT…FSLL), 333–353 (EVER…FIFL), 360–380 (LIPA…MYLC), 387–407 (LSLM…IVVL), 435–455 (VLSM…MAGL), 469–489 (VAIG…CAWL), 528–548 (WVMV…ISIP), 853–873 (LWLI…LYES), 875–895 (VHPL…LLAL), 897–917 (LFDA…IGIV), 953–973 (PIIM…LSSG), and 984–1004 (ITIV…TPVI).

This sequence belongs to the resistance-nodulation-cell division (RND) (TC 2.A.6) family. MdtC subfamily. Part of a tripartite efflux system composed of MdtA, MdtB and MdtC. MdtC forms a heteromultimer with MdtB.

Its subcellular location is the cell inner membrane. The polypeptide is Multidrug resistance protein MdtC (Yersinia pseudotuberculosis serotype O:1b (strain IP 31758)).